Reading from the N-terminus, the 352-residue chain is Uroporphyrinogen decarboxylase (352 aa).

Residues 26-30 (RQAGR), Asp76, Tyr153, Ser208, and His323 contribute to the substrate site.

It belongs to the uroporphyrinogen decarboxylase family. As to quaternary structure, homodimer.

The protein localises to the cytoplasm. The enzyme catalyses uroporphyrinogen III + 4 H(+) = coproporphyrinogen III + 4 CO2. The protein operates within porphyrin-containing compound metabolism; protoporphyrin-IX biosynthesis; coproporphyrinogen-III from 5-aminolevulinate: step 4/4. Catalyzes the decarboxylation of four acetate groups of uroporphyrinogen-III to yield coproporphyrinogen-III. The polypeptide is Uroporphyrinogen decarboxylase (Prochlorococcus marinus (strain NATL2A)).